Reading from the N-terminus, the 315-residue chain is Glutaminase (315 aa).

The substrate site is built by Ser70, Asn120, Glu166, Asn173, Tyr197, Tyr249, and Val267.

Belongs to the glutaminase family. Homotetramer.

The catalysed reaction is L-glutamine + H2O = L-glutamate + NH4(+). This chain is Glutaminase, found in Sinorhizobium fredii (strain NBRC 101917 / NGR234).